Here is a 61-residue protein sequence, read N- to C-terminus: Defensin BmKDfsin2 (61 aa).

The first 24 residues, 1–24 (METIVLLFLLALVFCTLEMGMVEA), serve as a signal peptide directing secretion. Intrachain disulfides connect Cys-28/Cys-49, Cys-35/Cys-57, and Cys-39/Cys-59.

The protein belongs to the invertebrate defensin family. Type 2 subfamily. As to expression, highly expressed in non-venom gland (hemolymph) and moderately expressed in venom gland.

The protein resides in the secreted. In terms of biological role, antibacterial peptide active against Gram-positive bacteria, but not on Gram-negative bacteria. Also has weak blocking activity on Kv1.1/KCNA1, Kv1.2/KCNA2, Kv1.3/KCNA3, KCa3.1/KCNN4/IK, KCa2.3/KCNN3/SK3 and Kv11.1/KCNH2/ERG1 channels (tested at 1 uM). It inhibits potassium channel current by interacting with the pore region. In Olivierus martensii (Manchurian scorpion), this protein is Defensin BmKDfsin2.